The sequence spans 1480 residues: C-type mannose receptor 2 (1480 aa).

Positions methionine 1 to proline 30 are cleaved as a signal peptide. Over alanine 31–alanine 1413 the chain is Extracellular. One can recognise a Ricin B-type lectin domain in the interval proline 40 to leucine 166. 2 cysteine pairs are disulfide-bonded: cysteine 53–cysteine 67 and cysteine 92–cysteine 111. Asparagine 101 and asparagine 139 each carry an N-linked (GlcNAc...) asparagine glycan. Positions serine 181–isoleucine 229 constitute a Fibronectin type-II domain. 4 cysteine pairs are disulfide-bonded: cysteine 186/cysteine 212, cysteine 200/cysteine 227, cysteine 265/cysteine 358, and cysteine 334/cysteine 350. Residues leucine 243 to lysine 359 enclose the C-type lectin 1 domain. N-linked (GlcNAc...) asparagine glycosylation is present at asparagine 363. C-type lectin domains follow at residues phenylalanine 388–lysine 504, histidine 527–cysteine 643, lysine 677–lysine 808, phenylalanine 831–lysine 950, phenylalanine 978–cysteine 1106, tyrosine 1131–cysteine 1242, and phenylalanine 1271–cysteine 1391. Intrachain disulfides connect cysteine 409/cysteine 503, cysteine 480/cysteine 495, cysteine 617/cysteine 634, cysteine 703/cysteine 807, cysteine 784/cysteine 799, cysteine 852/cysteine 949, and cysteine 926/cysteine 941. Asparagine 1028 carries N-linked (GlcNAc...) asparagine glycosylation. A disulfide bridge links cysteine 1077 with cysteine 1097. Lysine 1141 participates in a covalent cross-link: Glycyl lysine isopeptide (Lys-Gly) (interchain with G-Cter in SUMO1). Cysteine 1219 and cysteine 1233 form a disulfide bridge. An N-linked (GlcNAc...) asparagine glycan is attached at asparagine 1348. Cysteine 1367 and cysteine 1382 are disulfide-bonded. Residues leucine 1414–isoleucine 1434 traverse the membrane as a helical segment. Topologically, residues leucine 1435–glutamate 1480 are cytoplasmic. The tract at residues serine 1446 to glutamate 1480 is disordered.

Interacts directly with PLAUR/UPAR and PLAU/pro-UPA to form a tri-molecular complex. Interacts with collagen V. Interacts with C-terminal region of type I collagen/COL1A1. Post-translationally, N-glycosylated. In terms of processing, phosphorylated.

The protein resides in the cell membrane. May play a role as endocytotic lectin receptor displaying calcium-dependent lectin activity. Internalizes glycosylated ligands from the extracellular space for release in an endosomal compartment via clathrin-mediated endocytosis. May be involved in plasminogen activation system controlling the extracellular level of PLAUR/PLAU, and thus may regulate protease activity at the cell surface. May contribute to cellular uptake, remodeling and degradation of extracellular collagen matrices. May participate in remodeling of extracellular matrix cooperating with the matrix metalloproteinases (MMPs) secreted by hepatic stellate cells. May mediate endocytosis of partially degraded collagens and glycoproteins produced in the extracellular matrix by MMPs. This Rattus norvegicus (Rat) protein is C-type mannose receptor 2 (Mrc2).